A 328-amino-acid chain; its full sequence is Biotin synthase (328 aa).

In terms of domain architecture, Radical SAM core spans 48–275 (NRIQLSKLLN…KSHVRLTAGR (228 aa)). [4Fe-4S] cluster-binding residues include Cys-63, Cys-67, and Cys-70. Cys-107, Cys-138, Cys-198, and Arg-270 together coordinate [2Fe-2S] cluster.

Belongs to the radical SAM superfamily. Biotin synthase family. In terms of assembly, homodimer. [4Fe-4S] cluster serves as cofactor. [2Fe-2S] cluster is required as a cofactor.

It carries out the reaction (4R,5S)-dethiobiotin + (sulfur carrier)-SH + 2 reduced [2Fe-2S]-[ferredoxin] + 2 S-adenosyl-L-methionine = (sulfur carrier)-H + biotin + 2 5'-deoxyadenosine + 2 L-methionine + 2 oxidized [2Fe-2S]-[ferredoxin]. It functions in the pathway cofactor biosynthesis; biotin biosynthesis; biotin from 7,8-diaminononanoate: step 2/2. Catalyzes the conversion of dethiobiotin (DTB) to biotin by the insertion of a sulfur atom into dethiobiotin via a radical-based mechanism. The sequence is that of Biotin synthase from Brucella abortus (strain S19).